Consider the following 126-residue polypeptide: Holo-[acyl-carrier-protein] synthase (126 aa).

Mg(2+) is bound by residues D9 and E57.

Belongs to the P-Pant transferase superfamily. AcpS family. Mg(2+) is required as a cofactor.

It is found in the cytoplasm. It carries out the reaction apo-[ACP] + CoA = holo-[ACP] + adenosine 3',5'-bisphosphate + H(+). Transfers the 4'-phosphopantetheine moiety from coenzyme A to a Ser of acyl-carrier-protein. The sequence is that of Holo-[acyl-carrier-protein] synthase from Idiomarina loihiensis (strain ATCC BAA-735 / DSM 15497 / L2-TR).